The chain runs to 1696 residues: PH domain leucine-rich repeat protein phosphatase 1 (1696 aa).

Methionine 1 is subject to N-acetylmethionine. 2 disordered regions span residues 1–97 (MEPA…GGGA) and 222–398 (LGHG…VVGE). The segment covering 79–92 (VPQPAAGGAAPVTA) has biased composition (low complexity). A compositionally biased stretch (polar residues) spans 313–325 (DTESFSLSPSAES). Serine 378 is subject to Phosphoserine. The region spanning 499–599 (RIQLSGMYNV…WLRQVSKVAS (101 aa)) is the PH domain. 18 LRR repeats span residues 601–622 (RISS…LFYS), 624–645 (DLTH…PAAR), 655–676 (KLKS…VCSI), 678–699 (TLAE…VGAM), 701–722 (NLQT…LENM), 724–746 (QLSY…EKLT), 836–857 (FLKA…PVPN), 858–879 (YLSY…VCES), 881–902 (KLEV…LFCN), 904–925 (SLRK…LERT), 926–947 (SVEV…LLMK), 950–971 (SLRF…TLSE), 976–996 (ILQE…PLLT), 1000–1021 (RLKI…KMAK), 1024–1045 (ELEE…IMNC), 1047–1068 (RMHT…MQLP), 1069–1090 (EVKC…ENLP), and 1092–1113 (KLQE…SLEL). Residues 1138–1385 (SHGYTEASGV…DSISAVVVQL (248 aa)) form the PPM-type phosphatase domain. Mn(2+)-binding residues include aspartate 1173, glycine 1174, lysine 1337, and aspartate 1376. Disordered stretches follow at residues 1422-1473 (RPSD…SPAY) and 1610-1696 (KPGG…DTPL). 3 stretches are compositionally biased toward low complexity: residues 1431 to 1452 (SSSS…MSSE), 1647 to 1660 (QQQQ…QQQQ), and 1670 to 1680 (QAQAQAQAQAQ). The short motif at 1694-1696 (TPL) is the PDZ-binding element.

In terms of assembly, interacts with the nucleotide free form of K-Ras (KRAS) via its LRR repeats. Interacts with AKT2, AKT3 and PRKCB isoform beta-II. Interacts with WDR48 and USP12. Requires Mn(2+) as cofactor. As to expression, mainly present in brain (at protein level). Isoform 2 is more abundant in adult brain neurons than isoform 1 in. Isoforms 1 and 2 are expressed in the retina but not found in rod outer segments.

It is found in the cytoplasm. The protein resides in the membrane. Its subcellular location is the cell membrane. It localises to the nucleus. The protein localises to the nucleoplasm. It is found in the nucleus membrane. The catalysed reaction is O-phospho-L-seryl-[protein] + H2O = L-seryl-[protein] + phosphate. The enzyme catalyses O-phospho-L-threonyl-[protein] + H2O = L-threonyl-[protein] + phosphate. With respect to regulation, insensitive to okadaic acid. Deubiquitination by WDR48-USP12 complex positively regulates PHLPP1 stability. Functionally, protein phosphatase involved in regulation of Akt and PKC signaling. Mediates dephosphorylation in the C-terminal domain hydrophobic motif of members of the AGC Ser/Thr protein kinase family; specifically acts on 'Ser-473' of AKT2 and AKT3, 'Ser-660' of PRKCB and 'Ser-657' of PRKCA. Isoform 2 seems to have a major role in regulating Akt signaling in hippocampal neurons while isoform 1 may promote Akt and PKC activation and inhibit ERK signaling. Akt regulates the balance between cell survival and apoptosis through a cascade that primarily alters the function of transcription factors that regulate pro- and antiapoptotic genes. Dephosphorylation of 'Ser-473' of Akt triggers apoptosis and suppression of tumor growth. Dephosphorylation of PRKCA and PRKCB leads to their destabilization and degradation. Dephosphorylates STK4 on 'Thr-387' leading to STK4 activation and apoptosis. Dephosphorylates RPS6KB1 and is involved in regulation of cap-dependent translation. Inhibits cancer cell proliferation and may act as a tumor suppressor. Dephosphorylates RAF1 inhibiting its kinase activity. May act as a negative regulator of K-Ras signaling in membrane rafts. Involved in the hippocampus-dependent long-term memory formation. Involved in circadian control by regulating the consolidation of circadian periodicity after resetting. Involved in development and function of regulatory T-cells. This is PH domain leucine-rich repeat protein phosphatase 1 (Phlpp1) from Rattus norvegicus (Rat).